The following is a 490-amino-acid chain: Glutamyl-tRNA(Gln) amidotransferase subunit A (490 aa).

Catalysis depends on charge relay system residues Lys78 and Ser153. Ser177 (acyl-ester intermediate) is an active-site residue.

The protein belongs to the amidase family. GatA subfamily. As to quaternary structure, heterotrimer of A, B and C subunits.

It catalyses the reaction L-glutamyl-tRNA(Gln) + L-glutamine + ATP + H2O = L-glutaminyl-tRNA(Gln) + L-glutamate + ADP + phosphate + H(+). Allows the formation of correctly charged Gln-tRNA(Gln) through the transamidation of misacylated Glu-tRNA(Gln) in organisms which lack glutaminyl-tRNA synthetase. The reaction takes place in the presence of glutamine and ATP through an activated gamma-phospho-Glu-tRNA(Gln). The chain is Glutamyl-tRNA(Gln) amidotransferase subunit A from Desulforapulum autotrophicum (strain ATCC 43914 / DSM 3382 / VKM B-1955 / HRM2) (Desulfobacterium autotrophicum).